Here is a 368-residue protein sequence, read N- to C-terminus: MSNPTSTPRADGFRMPAEWEPHEQTWMVWPERPDNWRNGGKPAQAAFAAVAKAIARFEPVTVCASAGQYENARARLDDGNIRVVEISSDDAWVRDTGPTFVIDDKGDVRGVDWGFNAWGGFEGGLYFPWQRDDQVARKILEIERRARYRTDDFVLEGGSIHVDGEGTLITTEECLLNHNRNPHLSQAEIERTLRDYLAVESIIWLPNGLYNDETDGHVDNFCCYVRPGEVLLAWTDDQDDPNYLRCQAALRVLEESRDAKGRKLVVHKMPIPGPLYATQEECDGVDIVEGSQPRDPSIRLAGSYVNFLIVNGGIIAPSFDDPKDAEARAILQRVFPEHEVVMVPGREILLGGGNIHCITQQQPAPRKA.

Cysteine 357 functions as the Amidino-cysteine intermediate in the catalytic mechanism.

Belongs to the agmatine deiminase family. As to quaternary structure, homodimer.

The enzyme catalyses agmatine + H2O = N-carbamoylputrescine + NH4(+). The protein operates within amine and polyamine biosynthesis; putrescine biosynthesis via agmatine pathway; N-carbamoylputrescine from agmatine: step 1/1. Functionally, mediates the hydrolysis of agmatine into N-carbamoylputrescine in the arginine decarboxylase (ADC) pathway of putrescine biosynthesis, a basic polyamine. The protein is Agmatine deiminase of Pseudomonas aeruginosa (strain LESB58).